The chain runs to 752 residues: Photosystem I P700 chlorophyll a apoprotein A1 (752 aa).

The next 8 membrane-spanning stretches (helical) occupy residues 73–96, 159–182, 198–222, 294–312, 349–372, 388–414, 436–458, and 533–551; these read IFSAHFGHLAVVFIWLSGAYFHGA, LYVTAIGALVMAALMLFAGWFHYH, MNHHLAGLFGLGSLSWAGHQIHVSL, RAHHHLAIAVLFIVAGHMY, WHAQLSLNLALFGSLSIIVAHHMY, LCLFTHHVWIGGFLIVGAGAHAAIFMV, AIISHLNWVCIFLGFHSFGLYIH, and FLVHHIHAFTIHVTVLILL. The [4Fe-4S] cluster site is built by C575 and C584. 2 helical membrane-spanning segments follow: residues 591 to 612 and 666 to 688; these read HVFLGLFWMYNSLSVVLFHFSW and LSAYGLMFLGAHFIWAFSLMFLF. H677 contributes to the chlorophyll a' binding site. M685 and Y693 together coordinate chlorophyll a. W694 is a binding site for phylloquinone. The chain crosses the membrane as a helical span at residues 726–746; sequence AVGVAHYLLGGIATTWSFFHA.

This sequence belongs to the PsaA/PsaB family. In terms of assembly, the PsaA/B heterodimer binds the P700 chlorophyll special pair and subsequent electron acceptors. PSI consists of a core antenna complex that captures photons, and an electron transfer chain that converts photonic excitation into a charge separation. The eukaryotic PSI reaction center is composed of at least 11 subunits. P700 is a chlorophyll a/chlorophyll a' dimer, A0 is one or more chlorophyll a, A1 is one or both phylloquinones and FX is a shared 4Fe-4S iron-sulfur center. is required as a cofactor.

It localises to the plastid. The protein resides in the cyanelle thylakoid membrane. It carries out the reaction reduced [plastocyanin] + hnu + oxidized [2Fe-2S]-[ferredoxin] = oxidized [plastocyanin] + reduced [2Fe-2S]-[ferredoxin]. In terms of biological role, psaA and PsaB bind P700, the primary electron donor of photosystem I (PSI), as well as the electron acceptors A0, A1 and FX. PSI is a cytochrome c6-ferredoxin oxidoreductase, converting photonic excitation into a charge separation, which transfers an electron from the donor P700 chlorophyll pair to the spectroscopically characterized acceptors A0, A1, FX, FA and FB in turn. Oxidized P700 is reduced on the lumenal side of the thylakoid membrane by cytochrome c6. The protein is Photosystem I P700 chlorophyll a apoprotein A1 of Cyanophora paradoxa.